The sequence spans 239 residues: IkB-like protein (239 aa).

ANK repeat units lie at residues 48–80, 87–118, 124–153, and 158–187; these read SKIT…EIIS, DGNS…GIKV, NGIT…NPNQ, and KGFN…KPLF. The Nuclear localization signal motif lies at 81–87; it reads HYRRDKD. The short motif at 203–214 is the Nuclear localization signal element; it reads KKKPKIIITSCE. Residues 206–213 carry the PxIxITxC motif; Interaction with host PPP3CA motif; it reads PKIIITSC. The FLCV motif motif lies at 228–231; that stretch reads FLCV.

It belongs to the asfivirus A238L family. Interacts with host PPIA. Interacts with host PPP3CA/Calcineurin. Interacts with host RELA/p65; interaction of the 32 kDa form with host RELA results in the formation of a stable complex with NF-kappa-B. Interacts with host PPP3R1. Interacts with host EP300; this interaction inhibits the association of host EP300 with host RELA, JUN and NFATC2. Post-translationally, the protein exists in a 28 kDa and a 32 kDa form, probably due to post-translational modifications which are neither phosphorylation, nor sumoylation.

Its subcellular location is the host nucleus. It localises to the host cytoplasm. Its function is as follows. IkB-like protein that inhibits the binding of NF-kappa-B to DNA, thereby downregulating pro-inflammatory cytokine production. Forms a heterodimer with the NF-kappa-B subunit RELA/p65 and prevents the activation of the NF-kappa-B transcription factor. Inhibits calcineurin function, which is required for the induction of nuclear factor of activated T cells (NFAT)-dependent immune response genes. Prevents the binding of substrates to calcineurin without affecting the phosphatase activity. Does not contain the serine residues that are phosphorylated by host IkB kinase and thus is not degraded following stimulation of the NFkB pathway. The polypeptide is IkB-like protein (A238L) (Ornithodoros (relapsing fever ticks)).